A 296-amino-acid polypeptide reads, in one-letter code: MARPGLTIALLLTTPNLVDACQQWLPDTRYHSIVLSGPHQGQEQLDLVSTLEAQQEEIDAVVVEQQLLDASSRDQLLGRGLLFPAVVVGEMKGHVDYHAEELHLAEDQLAQLGYTVDAAISRFLRQGRADGRSDDDGLASVDKLSRRLQERLGYLGVFYKRDPSRFLGSLPTEERRELLESLQRTYRDLLISYFSDPAASNQALESFVNTAFFSDLPITRTVDIHVDQIDEFWKQLRLEGNKSEFLQDYRLALLDVMAHLCEMYRRSIPPDIPLSGLASGRHRREADLPDAPEVSS.

Positions 2–133 (ARPGLTIALL…LRQGRADGRS (132 aa)) are psR domain, binds oxidized quinones. The region spanning 2-152 (ARPGLTIALL…KLSRRLQERL (151 aa)) is the KaiA N-terminal domain. The interval 153–161 (GYLGVFYKR) is flexible linker. The region spanning 162-270 (DPSRFLGSLP…CEMYRRSIPP (109 aa)) is the KaiA C-terminal domain.

As to quaternary structure, homodimer. The KaiABC complex composition changes during the circadian cycle to control KaiC phosphorylation. Complexes KaiC(6), KaiA(2-4):KaiC(6), KaiB(6):KaiC(6) and KaiC(6):KaiB(6):KaiA(12) are among the most important forms, many form cooperatively. KaiA and CikA bind to the same region of the KaiB(fs) form and therefore compete.

Key component of the KaiABC oscillator complex, which constitutes the main circadian regulator in cyanobacteria. Complex composition changes during the circadian cycle to control KaiC phosphorylation. KaiA stimulates KaiC autophosphorylation, while KaiB sequesters KaiA, leading to KaiC autodephosphorylation. KaiA binding to the KaiC CII domain during the subjective day yields KaiA(2-4):KaiC(6) complexes which stimulate KaiC autophosphorylation. Phospho-Ser-431 KaiC accumulation triggers binding of KaiB during the subjective night to form the KaiB(6):KaiC(6) complex, leading to changes in the output regulators CikA and SasA. KaiB(6):KaiC(6) formation exposes a site for KaiA binding on KaiB that sequesters KaiA from KaiC's CII domain, making the KaiC(6):KaiB(6):KaiA(12) complex resulting in KaiC autodephosphorylation. Complete dephosphorylation of KaiC leads to dissociation of KaiA(2):KaiB(1), completing 1 cycle of the Kai oscillator. Functionally, binds oxidized quinones via the N-terminal PsR domain, allowing it to sense redox changes and possibly mediate clock input. In Parasynechococcus marenigrum (strain WH8102), this protein is Circadian clock oscillator protein KaiA.